Here is a 429-residue protein sequence, read N- to C-terminus: Glutamate-1-semialdehyde 2,1-aminomutase (429 aa).

Residue Lys-265 is modified to N6-(pyridoxal phosphate)lysine.

This sequence belongs to the class-III pyridoxal-phosphate-dependent aminotransferase family. HemL subfamily. As to quaternary structure, homodimer. The cofactor is pyridoxal 5'-phosphate.

The protein resides in the cytoplasm. It carries out the reaction (S)-4-amino-5-oxopentanoate = 5-aminolevulinate. The protein operates within porphyrin-containing compound metabolism; protoporphyrin-IX biosynthesis; 5-aminolevulinate from L-glutamyl-tRNA(Glu): step 2/2. The sequence is that of Glutamate-1-semialdehyde 2,1-aminomutase from Legionella pneumophila (strain Corby).